The chain runs to 161 residues: GTP-dependent dephospho-CoA kinase (161 aa).

GTP is bound by residues Asp-40, Val-41, Val-42, Asp-59, Glu-112, and Glu-135.

The protein belongs to the GTP-dependent DPCK family.

It carries out the reaction 3'-dephospho-CoA + GTP = GDP + CoA + H(+). It participates in cofactor biosynthesis; coenzyme A biosynthesis. In terms of biological role, catalyzes the GTP-dependent phosphorylation of the 3'-hydroxyl group of dephosphocoenzyme A to form coenzyme A (CoA). This Methanocorpusculum labreanum (strain ATCC 43576 / DSM 4855 / Z) protein is GTP-dependent dephospho-CoA kinase.